The primary structure comprises 103 residues: Histone H4 type VIII (103 aa).

The span at 1-14 (MSGRGKGGKGLGKG) shows a compositional bias: gly residues. The tract at residues 1 to 20 (MSGRGKGGKGLGKGGAKRHR) is disordered. N-acetylserine is present on S2. S2 is subject to Phosphoserine. Residue R4 is modified to Asymmetric dimethylarginine; by PRMT1; alternate. R4 bears the Citrulline; alternate mark. At R4 the chain carries Omega-N-methylarginine; by PRMT1; alternate. Residue R4 is modified to Symmetric dimethylarginine; by PRMT5 and PRMT7; alternate. 4 positions are modified to N6-(2-hydroxyisobutyryl)lysine; alternate: K6, K9, K13, and K17. Position 6 is an N6-acetyl-N6-methyllysine; alternate (K6). Residues K6, K9, K13, and K17 each carry the N6-acetyllysine modification. Residues K6, K9, K13, and K17 each carry the N6-butyryllysine; alternate modification. An N6-glutaryllysine; alternate modification is found at K6. K6, K9, K13, and K17 each carry N6-lactoyllysine; alternate. K9 is subject to N6-propionyllysine; alternate. N6-acetyl-N6-methyllysine; alternate is present on K13. An N6-glutaryllysine; alternate modification is found at K13. K13 carries the N6-methyllysine; alternate modification. K17 is modified (N6-propionyllysine; alternate). Position 21 is an N6-methyllysine; alternate (K21). K21 is subject to N6,N6,N6-trimethyllysine; alternate. K21 carries the N6,N6-dimethyllysine; alternate modification. N6-(2-hydroxyisobutyryl)lysine; alternate is present on residues K32 and K45. K32 is modified (N6-acetyllysine). N6-butyryllysine; alternate occurs at positions 32 and 45. Residue K32 is modified to N6-glutaryllysine; alternate. Residue K32 is modified to N6-lactoyllysine; alternate. An N6-propionyllysine; alternate mark is found at K32 and K45. K32 carries the N6-succinyllysine; alternate modification. K32 participates in a covalent cross-link: Glycyl lysine isopeptide (Lys-Gly) (interchain with G-Cter in UFM1); alternate. At S48 the chain carries Phosphoserine. Position 52 is a phosphotyrosine (Y52). K60 carries the post-translational modification N6-acetyllysine. An N6-glutaryllysine; alternate mark is found at K60, K78, and K80. At K60 the chain carries N6-(2-hydroxyisobutyryl)lysine. N6-(2-hydroxyisobutyryl)lysine; alternate occurs at positions 78 and 80. An N6-butyryllysine; alternate mark is found at K78 and K80. The residue at position 78 (K78) is an N6-lactoyllysine; alternate. K78 and K80 each carry N6-propionyllysine; alternate. Position 78 is an N6-succinyllysine (K78). Residue K80 is modified to N6-acetyllysine. Position 89 is a phosphotyrosine (Y89). Residue K92 is modified to N6-(2-hydroxyisobutyryl)lysine; alternate. K92 is subject to N6-butyryllysine; alternate. Position 92 is an N6-glutaryllysine; alternate (K92). K92 bears the N6-lactoyllysine; alternate mark. K92 is subject to N6-propionyllysine; alternate. K92 is subject to N6-succinyllysine; alternate. An N6-acetyllysine; alternate modification is found at K92. K92 is covalently cross-linked (Glycyl lysine isopeptide (Lys-Gly) (interchain with G-Cter in ubiquitin); alternate).

Belongs to the histone H4 family. In terms of assembly, the nucleosome is a histone octamer containing two molecules each of H2A, H2B, H3 and H4 assembled in one H3-H4 heterotetramer and two H2A-H2B heterodimers. The octamer wraps approximately 147 bp of DNA. Acetylation at Lys-6 (H4K5ac), Lys-9 (H4K8ac), Lys-13 (H4K12ac) and Lys-17 (H4K16ac) occurs in coding regions of the genome but not in heterochromatin. Post-translationally, citrullination at Arg-4 (H4R3ci) by PADI4 impairs methylation. In terms of processing, monomethylation and asymmetric dimethylation at Arg-4 (H4R3me1 and H4R3me2a, respectively) by PRMT1 favors acetylation at Lys-9 (H4K8ac) and Lys-13 (H4K12ac). Demethylation is performed by JMJD6. Symmetric dimethylation on Arg-4 (H4R3me2s) by the PRDM1/PRMT5 complex may play a crucial role in the germ-cell lineage. Monomethylated, dimethylated or trimethylated at Lys-21 (H4K20me1, H4K20me2, H4K20me3). Monomethylation is performed by KMT5A/SET8. Trimethylation is performed by KMT5B and KMT5C and induces gene silencing. Monomethylated at Lys-13 (H4K12me1) by N6AMT1; H4K12me1 modification is present at the promoters of numerous genes encoding cell cycle regulators. Post-translationally, acetyl-methylated at Lys-6 and Lys-13 (H4K5acme and H4K12acme, respectively), acetyl-methylation is an epigenetic mark of active chromatin associated with increased transcriptional initiation. Acetyl-methylation is formed by acetylation by EP300/p300 of lysine residues that are already monomethylated on the same side chain. H4K5acme and H4K12acme marks specifically bind BRD2. In terms of processing, ubiquitinated by the CUL4-DDB-RBX1 complex in response to ultraviolet irradiation. This may weaken the interaction between histones and DNA and facilitate DNA accessibility to repair proteins. Monoubiquitinated at Lys-92 of histone H4 (H4K91ub1) in response to DNA damage. The exact role of H4K91ub1 in DNA damage response is still unclear but it may function as a licensing signal for additional histone H4 post-translational modifications such as H4 Lys-21 methylation (H4K20me). Sumoylated, which is associated with transcriptional repression. Post-translationally, butyrylation of histones marks active promoters and competes with histone acetylation. In terms of processing, glutarylation at Lys-92 (H4K91glu) destabilizes nucleosomes by promoting dissociation of the H2A-H2B dimers from nucleosomes. Ufmylated; monofmylated by UFL1 at Lys-32 (H4K31Ufm1) in response to DNA damage. Post-translationally, lactylated in macrophages by EP300/P300 by using lactoyl-CoA directly derived from endogenous or exogenous lactate, leading to stimulates gene transcription. Delactylated by SIRT3 at Lys-17 (H4K16la).

The protein resides in the nucleus. Its subcellular location is the chromosome. Functionally, core component of nucleosome. Nucleosomes wrap and compact DNA into chromatin, limiting DNA accessibility to the cellular machineries which require DNA as a template. Histones thereby play a central role in transcription regulation, DNA repair, DNA replication and chromosomal stability. DNA accessibility is regulated via a complex set of post-translational modifications of histones, also called histone code, and nucleosome remodeling. The protein is Histone H4 type VIII (H4-VIII) of Gallus gallus (Chicken).